Reading from the N-terminus, the 411-residue chain is Tyrosine--tRNA ligase (411 aa).

Tyr-36 is a binding site for L-tyrosine. Residues 41–50 (PTADSLHVGH) carry the 'HIGH' region motif. Residues Tyr-172 and Gln-176 each contribute to the L-tyrosine site. The 'KMSKS' region signature appears at 232–236 (KMGKT). Position 235 (Lys-235) interacts with ATP. The S4 RNA-binding domain maps to 344-409 (YSIANILVVT…GKKNHIKVII (66 aa)).

Belongs to the class-I aminoacyl-tRNA synthetase family. TyrS type 1 subfamily. As to quaternary structure, homodimer.

The protein localises to the cytoplasm. It carries out the reaction tRNA(Tyr) + L-tyrosine + ATP = L-tyrosyl-tRNA(Tyr) + AMP + diphosphate + H(+). Its function is as follows. Catalyzes the attachment of tyrosine to tRNA(Tyr) in a two-step reaction: tyrosine is first activated by ATP to form Tyr-AMP and then transferred to the acceptor end of tRNA(Tyr). The protein is Tyrosine--tRNA ligase of Malacoplasma penetrans (strain HF-2) (Mycoplasma penetrans).